A 138-amino-acid polypeptide reads, in one-letter code: Large ribosomal subunit protein uL16 (138 aa).

Positions 1-13 (MLQPKRRKYRKEQ) are enriched in basic residues. The segment at 1–24 (MLQPKRRKYRKEQKGRNTGKATRG) is disordered.

The protein belongs to the universal ribosomal protein uL16 family. Part of the 50S ribosomal subunit.

In terms of biological role, binds 23S rRNA and is also seen to make contacts with the A and possibly P site tRNAs. The polypeptide is Large ribosomal subunit protein uL16 (Burkholderia multivorans (strain ATCC 17616 / 249)).